The sequence spans 396 residues: Formate-dependent phosphoribosylglycinamide formyltransferase (396 aa).

Residues 24 to 25 (EL) and Glu-84 contribute to the N(1)-(5-phospho-beta-D-ribosyl)glycinamide site. Residues Arg-116, Lys-157, 162–167 (SSGKGQ), 197–200 (EGFV), and Glu-205 each bind ATP. One can recognise an ATP-grasp domain in the interval 121 to 310 (RLAAETLGIK…EFALHVRAIL (190 aa)). 2 residues coordinate Mg(2+): Glu-269 and Glu-281. Residues Asp-288, Lys-359, and 366-367 (RR) contribute to the N(1)-(5-phospho-beta-D-ribosyl)glycinamide site.

It belongs to the PurK/PurT family. Homodimer.

It carries out the reaction N(1)-(5-phospho-beta-D-ribosyl)glycinamide + formate + ATP = N(2)-formyl-N(1)-(5-phospho-beta-D-ribosyl)glycinamide + ADP + phosphate + H(+). Its pathway is purine metabolism; IMP biosynthesis via de novo pathway; N(2)-formyl-N(1)-(5-phospho-D-ribosyl)glycinamide from N(1)-(5-phospho-D-ribosyl)glycinamide (formate route): step 1/1. Involved in the de novo purine biosynthesis. Catalyzes the transfer of formate to 5-phospho-ribosyl-glycinamide (GAR), producing 5-phospho-ribosyl-N-formylglycinamide (FGAR). Formate is provided by PurU via hydrolysis of 10-formyl-tetrahydrofolate. The polypeptide is Formate-dependent phosphoribosylglycinamide formyltransferase (Psychromonas ingrahamii (strain DSM 17664 / CCUG 51855 / 37)).